A 321-amino-acid chain; its full sequence is ATP-dependent 6-phosphofructokinase (321 aa).

Gly12 provides a ligand contact to ATP. Residues 22 to 26 (RAVVR) and 55 to 60 (RYSVSD) each bind ADP. ATP contacts are provided by residues 73-74 (RF) and 103-106 (GDGS). Mg(2+) is bound at residue Asp104. 127–129 (TID) lines the substrate pocket. Asp129 acts as the Proton acceptor in catalysis. Position 156 (Arg156) interacts with ADP. Substrate contacts are provided by residues Arg164 and 171–173 (MGR). ADP-binding positions include 187 to 189 (GCE) and 215 to 217 (KRH). Substrate contacts are provided by residues Glu224, Arg245, and 251–254 (HVQR).

Belongs to the phosphofructokinase type A (PFKA) family. ATP-dependent PFK group I subfamily. Prokaryotic clade 'B1' sub-subfamily. Homotetramer. It depends on Mg(2+) as a cofactor.

The protein localises to the cytoplasm. The catalysed reaction is beta-D-fructose 6-phosphate + ATP = beta-D-fructose 1,6-bisphosphate + ADP + H(+). The protein operates within carbohydrate degradation; glycolysis; D-glyceraldehyde 3-phosphate and glycerone phosphate from D-glucose: step 3/4. Allosterically activated by ADP and other diphosphonucleosides, and allosterically inhibited by phosphoenolpyruvate. Functionally, catalyzes the phosphorylation of D-fructose 6-phosphate to fructose 1,6-bisphosphate by ATP, the first committing step of glycolysis. In Actinobacillus succinogenes (strain ATCC 55618 / DSM 22257 / CCUG 43843 / 130Z), this protein is ATP-dependent 6-phosphofructokinase.